Here is a 266-residue protein sequence, read N- to C-terminus: Gasdermin bGSDM (266 aa).

C6 carries S-palmitoyl cysteine lipidation. Transmembrane regions (beta stranded) follow at residues 70–86 (ISHS…AGNF), 99–117 (APKL…FSFS), 163–180 (AIDM…DVQA), and 189–205 (LGGK…TISF). Residues 245-266 (GAAEPYLLRRGQVLIVEDMQAT) form a C-terminal region region.

This sequence belongs to the bacterial gasdermin family. As to quaternary structure, monomer. In terms of assembly, forms large, homooligomeric ring-shaped pores when inserted in membranes. Post-translationally, cleavage by the adjacently encoded protease (probably ISF6_0256) predicted to occur between Glu-244 and Gly-245 relieves autoinhibition, releasing the N-terminus which initiates loss of cell integrity. Palmitoylation helps stabilize the inactive state; may self palmitoylate. Palmitoylation plays a significant role in pore formation.

Its subcellular location is the cytoplasm. It localises to the cell inner membrane. Its activity is regulated as follows. The full-length protein before cleavage is inactive: intramolecular interactions between the N-terminal domain and the C-terminal region as well as the lipid modification, mediate autoinhibition. The pyroptosis-like-inducing activity is carried by the released N-terminal domain (Gasdermin bGSDM, N-terminus). Functionally, precursor of a pore-forming protein involved in defense against bacteriophages. Cleavage of this precursor by its dedicated, neighboring protease (probably ISF6_0256) releases the active moiety (gasdermin bGSDM, N-terminus) which inserts into membranes, forming pores and triggering cell death. In terms of biological role, pore-forming protein that causes membrane permeabilization via a pyroptosis-like activity. Makes ring-like pores with an interior pore diameter of 300-400 Angstroms, when integrated in liposomes. In Piscinibacter sakaiensis (Ideonella sakaiensis), this protein is Gasdermin bGSDM.